The chain runs to 514 residues: DNA-(apurinic or apyrimidinic site) endonuclease 2 (514 aa).

Residues Asn-8 and Glu-48 each coordinate Mg(2+). Residue Tyr-156 is part of the active site. Mg(2+) contacts are provided by Asp-197, Asn-199, Asp-303, and His-304. Asp-197 acts as the Proton donor/acceptor in catalysis. His-304 serves as the catalytic Proton acceptor. The interval 359-417 is disordered; it reads PSNQTQVHMRKNKARVRSTRSRPSKTGSSRGQKNLMSYFQPSSSGPQTSNLDLPSLGTL. Residues 366-381 show a composition bias toward basic residues; it reads HMRKNKARVRSTRSRP. Lys-371 is covalently cross-linked (Glycyl lysine isopeptide (Lys-Gly) (interchain with G-Cter in ubiquitin)). Positions 382-410 are enriched in polar residues; that stretch reads SKTGSSRGQKNLMSYFQPSSSGPQTSNLD. The interval 390–397 is required for the interaction and colocalization with PCNA in nuclear foci in presence of oxidative-induced DNA damaging agents; it reads QKNLMSYF. Zn(2+)-binding residues include Cys-465, His-468, Cys-491, and Cys-505. A GRF-type zinc finger spans residues 465–514; it reads CGGHREPCVMRTVKKPGPNLGRHFYMCARPQGPPTDPSSRCNFFLWSRPS.

This sequence belongs to the DNA repair enzymes AP/ExoA family. Interacts with PCNA; this interaction is triggered by reactive oxygen species and increased by misincorporation of uracil in nuclear DNA. The cofactor is Mg(2+). Mn(2+) serves as cofactor. Post-translationally, ubiquitinated by the CUL9-RBX1 complex. Ubiquitinated by MKRN3 at Lys-371 leading to proteasomal degradation.

The protein resides in the nucleus. The protein localises to the cytoplasm. Its subcellular location is the mitochondrion. It carries out the reaction Exonucleolytic cleavage in the 3'- to 5'-direction to yield nucleoside 5'-phosphates.. With respect to regulation, 3'-5' exonuclease activity is activated by sodium and manganese. 3'-5' exonuclease and 3'-phosphodiesterase activities are stimulated in presence of PCNA. Its function is as follows. Functions as a weak apurinic/apyrimidinic (AP) endodeoxyribonuclease in the DNA base excision repair (BER) pathway of DNA lesions induced by oxidative and alkylating agents. Initiates repair of AP sites in DNA by catalyzing hydrolytic incision of the phosphodiester backbone immediately adjacent to the damage, generating a single-strand break with 5'-deoxyribose phosphate and 3'-hydroxyl ends. Also displays double-stranded DNA 3'-5' exonuclease, 3'-phosphodiesterase activities. Shows robust 3'-5' exonuclease activity on 3'-recessed heteroduplex DNA and is able to remove mismatched nucleotides preferentially. Shows fairly strong 3'-phosphodiesterase activity involved in the removal of 3'-damaged termini formed in DNA by oxidative agents. In the nucleus functions in the PCNA-dependent BER pathway. Plays a role in reversing blocked 3' DNA ends, problematic lesions that preclude DNA synthesis. Required for somatic hypermutation (SHM) and DNA cleavage step of class switch recombination (CSR) of immunoglobulin genes. Required for proper cell cycle progression during proliferation of peripheral lymphocytes. This Bos taurus (Bovine) protein is DNA-(apurinic or apyrimidinic site) endonuclease 2 (APEX2).